Consider the following 206-residue polypeptide: Dephospho-CoA kinase (206 aa).

The DPCK domain occupies 4 to 200; sequence TVALTGGIGS…ASYLKLASQF (197 aa). 12–17 serves as a coordination point for ATP; it reads GSGKST.

It belongs to the CoaE family.

It localises to the cytoplasm. It catalyses the reaction 3'-dephospho-CoA + ATP = ADP + CoA + H(+). It functions in the pathway cofactor biosynthesis; coenzyme A biosynthesis; CoA from (R)-pantothenate: step 5/5. Its function is as follows. Catalyzes the phosphorylation of the 3'-hydroxyl group of dephosphocoenzyme A to form coenzyme A. The chain is Dephospho-CoA kinase from Salmonella typhimurium (strain LT2 / SGSC1412 / ATCC 700720).